The sequence spans 327 residues: Annexin A8 (327 aa).

4 Annexin repeats span residues 21 to 92 (FNPD…ALMY), 93 to 164 (PPYR…CLLQ), 177 to 249 (GLAL…TVVK), and 253 to 324 (NLHS…SLVG). Residues M266, G268, G270, and D310 each contribute to the Ca(2+) site.

The protein belongs to the annexin family.

This protein is an anticoagulant protein that acts as an indirect inhibitor of the thromboplastin-specific complex, which is involved in the blood coagulation cascade. This is Annexin A8 from Homo sapiens (Human).